The chain runs to 283 residues: ATP phosphoribosyltransferase (283 aa).

This sequence belongs to the ATP phosphoribosyltransferase family. Long subfamily. The cofactor is Mg(2+).

Its subcellular location is the cytoplasm. It catalyses the reaction 1-(5-phospho-beta-D-ribosyl)-ATP + diphosphate = 5-phospho-alpha-D-ribose 1-diphosphate + ATP. It functions in the pathway amino-acid biosynthesis; L-histidine biosynthesis; L-histidine from 5-phospho-alpha-D-ribose 1-diphosphate: step 1/9. Its activity is regulated as follows. Feedback inhibited by histidine. Catalyzes the condensation of ATP and 5-phosphoribose 1-diphosphate to form N'-(5'-phosphoribosyl)-ATP (PR-ATP). Has a crucial role in the pathway because the rate of histidine biosynthesis seems to be controlled primarily by regulation of HisG enzymatic activity. This Bacteroides fragilis (strain ATCC 25285 / DSM 2151 / CCUG 4856 / JCM 11019 / LMG 10263 / NCTC 9343 / Onslow / VPI 2553 / EN-2) protein is ATP phosphoribosyltransferase.